A 77-amino-acid polypeptide reads, in one-letter code: Large ribosomal subunit protein uL29 (77 aa).

Belongs to the universal ribosomal protein uL29 family.

The protein is Large ribosomal subunit protein uL29 of Corynebacterium urealyticum (strain ATCC 43042 / DSM 7109).